Here is a 143-residue protein sequence, read N- to C-terminus: UPF0763 protein HH_0976 (143 aa).

It belongs to the UPF0763 family.

The chain is UPF0763 protein HH_0976 from Helicobacter hepaticus (strain ATCC 51449 / 3B1).